The chain runs to 115 residues: Large ribosomal subunit protein bL20 (115 aa).

This sequence belongs to the bacterial ribosomal protein bL20 family.

Functionally, binds directly to 23S ribosomal RNA and is necessary for the in vitro assembly process of the 50S ribosomal subunit. It is not involved in the protein synthesizing functions of that subunit. The polypeptide is Large ribosomal subunit protein bL20 (Methylococcus capsulatus (strain ATCC 33009 / NCIMB 11132 / Bath)).